Consider the following 345-residue polypeptide: Opioid-binding protein/cell adhesion molecule (345 aa).

Residues 1–27 (MGVCGYLFLPWKCLVVVSLRLLFLVPT) form the signal peptide. Ig-like C2-type domains lie at 39-126 (PKAM…PKTS), 136-219 (PQIM…VKIT), and 223-310 (PPYI…ASIT). N-linked (GlcNAc...) asparagine glycans are attached at residues asparagine 44, asparagine 70, and asparagine 140. A disulfide bridge links cysteine 57 with cysteine 115. 2 cysteine pairs are disulfide-bonded: cysteine 157/cysteine 202 and cysteine 244/cysteine 296. Asparagine 285, asparagine 293, and asparagine 306 each carry an N-linked (GlcNAc...) asparagine glycan. The GPI-anchor amidated asparagine moiety is linked to residue asparagine 322. Residues 323–345 (SASRALACLWLSGTLLAHFFIKF) constitute a propeptide, removed in mature form.

This sequence belongs to the immunoglobulin superfamily. IgLON family.

Its subcellular location is the cell membrane. Binds opioids in the presence of acidic lipids; probably involved in cell contact. This Homo sapiens (Human) protein is Opioid-binding protein/cell adhesion molecule (OPCML).